The following is a 202-amino-acid chain: Orotate phosphoribosyltransferase (202 aa).

5-phospho-alpha-D-ribose 1-diphosphate-binding positions include Lys-93 and 113–121; that span reads EDIITTGGS. The orotate site is built by Thr-117 and Arg-145.

This sequence belongs to the purine/pyrimidine phosphoribosyltransferase family. PyrE subfamily. Homodimer. Mg(2+) serves as cofactor.

It carries out the reaction orotidine 5'-phosphate + diphosphate = orotate + 5-phospho-alpha-D-ribose 1-diphosphate. It participates in pyrimidine metabolism; UMP biosynthesis via de novo pathway; UMP from orotate: step 1/2. Its function is as follows. Catalyzes the transfer of a ribosyl phosphate group from 5-phosphoribose 1-diphosphate to orotate, leading to the formation of orotidine monophosphate (OMP). In Campylobacter jejuni subsp. jejuni serotype O:23/36 (strain 81-176), this protein is Orotate phosphoribosyltransferase.